The following is a 127-amino-acid chain: Small ribosomal subunit protein uS12 (127 aa).

Asp89 carries the 3-methylthioaspartic acid modification. The disordered stretch occupies residues Ala101 to Lys127. A compositionally biased stretch (basic residues) spans Thr111–Lys127.

The protein belongs to the universal ribosomal protein uS12 family. As to quaternary structure, part of the 30S ribosomal subunit. Contacts proteins S8 and S17. May interact with IF1 in the 30S initiation complex.

With S4 and S5 plays an important role in translational accuracy. In terms of biological role, interacts with and stabilizes bases of the 16S rRNA that are involved in tRNA selection in the A site and with the mRNA backbone. Located at the interface of the 30S and 50S subunits, it traverses the body of the 30S subunit contacting proteins on the other side and probably holding the rRNA structure together. The combined cluster of proteins S8, S12 and S17 appears to hold together the shoulder and platform of the 30S subunit. The protein is Small ribosomal subunit protein uS12 of Flavobacterium johnsoniae (strain ATCC 17061 / DSM 2064 / JCM 8514 / BCRC 14874 / CCUG 350202 / NBRC 14942 / NCIMB 11054 / UW101) (Cytophaga johnsonae).